Consider the following 641-residue polypeptide: Methionine--tRNA ligase (641 aa).

Residues 13–23 (YYPSAKLHIGN) carry the 'HIGH' region motif. Zn(2+)-binding residues include Cys-128, Cys-131, Cys-145, and Cys-148. The 'KMSKS' region motif lies at 298–302 (KMSKS). An ATP-binding site is contributed by Lys-301. In terms of domain architecture, tRNA-binding spans 539–641 (DFDKIDLRVV…GELPTGSQVR (103 aa)).

It belongs to the class-I aminoacyl-tRNA synthetase family. MetG type 2A subfamily. In terms of assembly, homodimer. It depends on Zn(2+) as a cofactor.

It is found in the cytoplasm. It catalyses the reaction tRNA(Met) + L-methionine + ATP = L-methionyl-tRNA(Met) + AMP + diphosphate. Functionally, is required not only for elongation of protein synthesis but also for the initiation of all mRNA translation through initiator tRNA(fMet) aminoacylation. The polypeptide is Methionine--tRNA ligase (Clostridium tetani (strain Massachusetts / E88)).